The chain runs to 589 residues: Polypeptide N-acetylgalactosaminyltransferase 4 (589 aa).

Over 1–11 (MLPRMLKMKTV) the chain is Cytoplasmic. Residues 12–31 (GTVLAVIWLFGLAFIYVQST) form a helical; Signal-anchor for type II membrane protein membrane-spanning segment. Topologically, residues 32–589 (SSSLRPPGRH…WIFEKLDTYE (558 aa)) are lumenal. Residues 33-73 (SSLRPPGRHPPPLPQLDPLIPQNPPQNDEIRPKKSAPPIPT) are disordered. Intrachain disulfides connect Cys140-Cys369, Cys360-Cys438, Cys471-Cys488, Cys514-Cys531, and Cys553-Cys571. The tract at residues 150 to 255 (MQPTTVIITY…QKWLEPLLAR (106 aa)) is catalytic subdomain A. Substrate contacts are provided by Asp191 and Arg216. Residue Asp239 coordinates Mn(2+). Substrate is bound at residue Ser240. His241 serves as a coordination point for Mn(2+). Positions 315-377 (PIRSPTMAGG…PCSRVGHVFR (63 aa)) are catalytic subdomain B. Residue Trp346 participates in substrate binding. His374 contributes to the Mn(2+) binding site. Substrate-binding residues include Arg377, His380, and Tyr382. One can recognise a Ricin B-type lectin domain in the interval 458–589 (TPGKSFQMKI…WIFEKLDTYE (132 aa)). N-linked (GlcNAc...) asparagine glycosylation occurs at Asn523.

This sequence belongs to the glycosyltransferase 2 family. GalNAc-T subfamily. Mn(2+) serves as cofactor.

It localises to the golgi apparatus membrane. The catalysed reaction is L-seryl-[protein] + UDP-N-acetyl-alpha-D-galactosamine = a 3-O-[N-acetyl-alpha-D-galactosaminyl]-L-seryl-[protein] + UDP + H(+). It carries out the reaction L-threonyl-[protein] + UDP-N-acetyl-alpha-D-galactosamine = a 3-O-[N-acetyl-alpha-D-galactosaminyl]-L-threonyl-[protein] + UDP + H(+). The protein operates within protein modification; protein glycosylation. Functionally, catalyzes the initial reaction in O-linked oligosaccharide biosynthesis, the transfer of an N-acetyl-D-galactosamine residue to a serine or threonine residue on the protein receptor. In Caenorhabditis elegans, this protein is Polypeptide N-acetylgalactosaminyltransferase 4 (gly-4).